We begin with the raw amino-acid sequence, 367 residues long: Glutamate 5-kinase (367 aa).

Lys10 lines the ATP pocket. Residues Ser50, Asp137, and Asn149 each coordinate substrate. ATP-binding positions include 169–170 and 211–217; these read TD and TGGMSTK. The 79-residue stretch at 275-353 folds into the PUA domain; sequence AGEITVDEGA…QEIDAILGYE (79 aa).

The protein belongs to the glutamate 5-kinase family.

Its subcellular location is the cytoplasm. The enzyme catalyses L-glutamate + ATP = L-glutamyl 5-phosphate + ADP. It functions in the pathway amino-acid biosynthesis; L-proline biosynthesis; L-glutamate 5-semialdehyde from L-glutamate: step 1/2. In terms of biological role, catalyzes the transfer of a phosphate group to glutamate to form L-glutamate 5-phosphate. This Escherichia fergusonii (strain ATCC 35469 / DSM 13698 / CCUG 18766 / IAM 14443 / JCM 21226 / LMG 7866 / NBRC 102419 / NCTC 12128 / CDC 0568-73) protein is Glutamate 5-kinase.